The following is a 431-amino-acid chain: Tol-Pal system protein TolB (431 aa).

Positions 1 to 26 are cleaved as a signal peptide; sequence MSLMTKLGFRALVASCLIAAGGAANA. Residues 411–431 are disordered; it reads PQILSVQGGSVREPSWGPFMQ.

The protein belongs to the TolB family. The Tol-Pal system is composed of five core proteins: the inner membrane proteins TolA, TolQ and TolR, the periplasmic protein TolB and the outer membrane protein Pal. They form a network linking the inner and outer membranes and the peptidoglycan layer.

The protein resides in the periplasm. In terms of biological role, part of the Tol-Pal system, which plays a role in outer membrane invagination during cell division and is important for maintaining outer membrane integrity. In Burkholderia vietnamiensis (strain G4 / LMG 22486) (Burkholderia cepacia (strain R1808)), this protein is Tol-Pal system protein TolB.